The primary structure comprises 67 residues: MKLTCVLIAAVLLLAVCQLDSADATGYMRKNPSLRSPKRTRGCKSKGSFCWNGIECCGGNCFFACVY.

Residues 1-24 (MKLTCVLIAAVLLLAVCQLDSADA) form the signal peptide. A propeptide spanning residues 25 to 37 (TGYMRKNPSLRSP) is cleaved from the precursor. Cystine bridges form between Cys-43–Cys-57, Cys-50–Cys-61, and Cys-56–Cys-65.

It belongs to the conotoxin O1 superfamily. Expressed by the venom duct.

It localises to the secreted. This is Conotoxin Cl6.6b from Californiconus californicus (California cone).